We begin with the raw amino-acid sequence, 325 residues long: Ribosomal RNA small subunit methyltransferase H (325 aa).

Residues 38–40 (GGY), D55, F82, D103, and Q110 each bind S-adenosyl-L-methionine. 2 disordered regions span residues 256-275 (SGGD…AARA) and 281-307 (PARK…RSAV).

The protein belongs to the methyltransferase superfamily. RsmH family.

Its subcellular location is the cytoplasm. It catalyses the reaction cytidine(1402) in 16S rRNA + S-adenosyl-L-methionine = N(4)-methylcytidine(1402) in 16S rRNA + S-adenosyl-L-homocysteine + H(+). Specifically methylates the N4 position of cytidine in position 1402 (C1402) of 16S rRNA. This Sphingopyxis alaskensis (strain DSM 13593 / LMG 18877 / RB2256) (Sphingomonas alaskensis) protein is Ribosomal RNA small subunit methyltransferase H.